The following is an 816-amino-acid chain: Chitin synthase 1 (816 aa).

Positions 1 to 21 are disordered; it reads MLSQGEILRNPSRTRLQRPPK. Topologically, residues 1-32 are cytoplasmic; that stretch reads MLSQGEILRNPSRTRLQRPPKSRSERKGWWYR. The chain crosses the membrane as a helical span at residues 33 to 53; that stretch reads VTIFLTCLIPNFMLRCFGMTT. Over 54 to 63 the chain is Extracellular; that stretch reads PEVQHAWREK. The helical transmembrane segment at 64 to 84 threads the bilayer; that stretch reads VALCICIFFCWIILGFTTYGM. Topologically, residues 85-240 are cytoplasmic; sequence NTIICKGSNQ…TPGCLLADTM (156 aa). A helical transmembrane segment spans residues 241–261; it reads FWITTISIFGLIITKFLLGFF. The Extracellular segment spans residues 262–697; it reads YSWYAKRRPK…QLVVVMELFG (436 aa). 2 N-linked (GlcNAc...) asparagine glycosylation sites follow: N319 and N664. The chain crosses the membrane as a helical span at residues 698–718; the sequence is TLVLPAAIIFTFVMIAVSILI. Topologically, residues 719–720 are cytoplasmic; sequence EP. Residues 721-741 traverse the membrane as a helical segment; sequence AWVPLIMLVGIFGLPAVLILI. The Extracellular portion of the chain corresponds to 742 to 745; it reads TTME. Residues 746–766 traverse the membrane as a helical segment; sequence IQYVFWCLVYILSIPIWNFVL. The Cytoplasmic segment spans residues 767 to 816; sequence PTYAFWHFDNFSWGDTRKVDGEGKEDEEGEFDHTKIRIRELEEFLSEANK.

It belongs to the chitin synthase family. Class IV subfamily.

It is found in the cell membrane. The catalysed reaction is [(1-&gt;4)-N-acetyl-beta-D-glucosaminyl](n) + UDP-N-acetyl-alpha-D-glucosamine = [(1-&gt;4)-N-acetyl-beta-D-glucosaminyl](n+1) + UDP + H(+). Functionally, polymerizes chitin, a structural polymer of the cell wall and septum, by transferring the sugar moiety of UDP-GlcNAc to the non-reducing end of the growing chitin polymer. The chain is Chitin synthase 1 (CHS1) from Encephalitozoon cuniculi (strain GB-M1) (Microsporidian parasite).